Here is a 201-residue protein sequence, read N- to C-terminus: Small ribosomal subunit protein uS4c (201 aa).

The interval 15 to 43 (LGALPGLTSKRPTPGSDLRNQSRSGKRSQ) is disordered. The region spanning 89–149 (MRLDNILFRL…DEQKSRALIQ (61 aa)) is the S4 RNA-binding domain.

The protein belongs to the universal ribosomal protein uS4 family. Part of the 30S ribosomal subunit. Contacts protein S5. The interaction surface between S4 and S5 is involved in control of translational fidelity.

The protein resides in the plastid. Its subcellular location is the chloroplast. In terms of biological role, one of the primary rRNA binding proteins, it binds directly to 16S rRNA where it nucleates assembly of the body of the 30S subunit. Its function is as follows. With S5 and S12 plays an important role in translational accuracy. The protein is Small ribosomal subunit protein uS4c (rps4) of Nandina domestica (Heavenly bamboo).